A 386-amino-acid chain; its full sequence is Erythronate-4-phosphate dehydrogenase (386 aa).

Positions 59 and 81 each coordinate substrate. NAD(+) is bound at residue D162. Residue R239 is part of the active site. Residue D262 participates in NAD(+) binding. E267 is a catalytic residue. The Proton donor role is filled by H284. G287 serves as a coordination point for NAD(+). A substrate-binding site is contributed by Y288.

This sequence belongs to the D-isomer specific 2-hydroxyacid dehydrogenase family. PdxB subfamily. Homodimer.

It is found in the cytoplasm. It catalyses the reaction 4-phospho-D-erythronate + NAD(+) = (R)-3-hydroxy-2-oxo-4-phosphooxybutanoate + NADH + H(+). Its pathway is cofactor biosynthesis; pyridoxine 5'-phosphate biosynthesis; pyridoxine 5'-phosphate from D-erythrose 4-phosphate: step 2/5. Functionally, catalyzes the oxidation of erythronate-4-phosphate to 3-hydroxy-2-oxo-4-phosphonooxybutanoate. The sequence is that of Erythronate-4-phosphate dehydrogenase from Psychrobacter cryohalolentis (strain ATCC BAA-1226 / DSM 17306 / VKM B-2378 / K5).